The following is a 298-amino-acid chain: MTDLHTDVERYLRYLSVERQLSPITLLNYQRQLEAIINFASENGLQSWQQCDVTVVRNFAVRSRRKGLGAASLALRLSALRSFFDWLVSQNELKANPAKGVSAPKAPRHLPKNIDVDDMNRLLDIDINDPLAVRDRAMLEVMYGAGLRLSELVGLDIKHLDLESGEVWVMGKGSKERRLPIGRNAVAWIEHWLDLRDLFGSEDDALFLSKLGKRISARNVQKRFAEWGIKQGLNNHVHPHKLRHSFATHMLESSGDLRGVQELLGHANLSTTQIYTHLDFQHLASVYDAAHPRAKRGK.

Residues 2–88 (TDLHTDVERY…ALRSFFDWLV (87 aa)) form the Core-binding (CB) domain. Positions 109 to 288 (HLPKNIDVDD…DFQHLASVYD (180 aa)) constitute a Tyr recombinase domain. Active-site residues include Arg148, Lys172, His240, Arg243, and His266. Tyr275 functions as the O-(3'-phospho-DNA)-tyrosine intermediate in the catalytic mechanism.

This sequence belongs to the 'phage' integrase family. XerC subfamily. Forms a cyclic heterotetrameric complex composed of two molecules of XerC and two molecules of XerD, in which XerC interacts with XerD via its C-terminal region, XerD interacts with XerC via its C-terminal region and so on.

It is found in the cytoplasm. FtsK may regulate the catalytic switch between XerC and XerD in the heterotetrameric complex during the two steps of the recombination process. Site-specific tyrosine recombinase, which acts by catalyzing the cutting and rejoining of the recombining DNA molecules. Binds cooperatively to specific DNA consensus sequences that are separated from XerD binding sites by a short central region, forming the heterotetrameric XerC-XerD complex that recombines DNA substrates. The complex is essential to convert dimers of the bacterial chromosome into monomers to permit their segregation at cell division. It also contributes to the segregational stability of plasmids. In the complex XerC specifically exchanges the top DNA strands. The chain is Tyrosine recombinase XerC from Escherichia coli O139:H28 (strain E24377A / ETEC).